The sequence spans 228 residues: Putative lipoprotein LprH (228 aa).

A signal peptide spans 1–27 (MACLGRPGCRGWAGASLVLVVVLALAA). The N-palmitoyl cysteine moiety is linked to residue cysteine 28. The S-diacylglycerol cysteine moiety is linked to residue cysteine 28. A helical membrane pass occupies residues 191-211 (GLAVVPHAVLVLSACGFKPGF).

The protein resides in the cell membrane. The protein is Putative lipoprotein LprH (lprH) of Mycobacterium bovis (strain ATCC BAA-935 / AF2122/97).